The chain runs to 106 residues: Ig kappa chain C region, B allele (106 aa).

Residues 5–102 enclose the Ig-like domain; it reads PTVSIFPPST…SSSPVVKSFN (98 aa). A disulfide bridge connects residues C26 and C86.

The sequence is that of Ig kappa chain C region, B allele from Rattus norvegicus (Rat).